Reading from the N-terminus, the 507-residue chain is Secreted lipase ARB_01498 (507 aa).

The first 21 residues, 1 to 21, serve as a signal peptide directing secretion; it reads MFVQLLTYGLVAASTLQGVFA. The Acyl-ester intermediate role is filled by Ser196. 4 N-linked (GlcNAc...) asparagine glycosylation sites follow: Asn262, Asn321, Asn358, and Asn416.

Belongs to the type-B carboxylesterase/lipase family.

Its subcellular location is the secreted. The catalysed reaction is a triacylglycerol + H2O = a diacylglycerol + a fatty acid + H(+). This Arthroderma benhamiae (strain ATCC MYA-4681 / CBS 112371) (Trichophyton mentagrophytes) protein is Secreted lipase ARB_01498.